Consider the following 171-residue polypeptide: S-ribosylhomocysteine lyase (171 aa).

The Fe cation site is built by His54, His58, and Cys128.

Belongs to the LuxS family. Homodimer. It depends on Fe cation as a cofactor.

It carries out the reaction S-(5-deoxy-D-ribos-5-yl)-L-homocysteine = (S)-4,5-dihydroxypentane-2,3-dione + L-homocysteine. In terms of biological role, involved in the synthesis of autoinducer 2 (AI-2) which is secreted by bacteria and is used to communicate both the cell density and the metabolic potential of the environment. The regulation of gene expression in response to changes in cell density is called quorum sensing. Catalyzes the transformation of S-ribosylhomocysteine (RHC) to homocysteine (HC) and 4,5-dihydroxy-2,3-pentadione (DPD). The protein is S-ribosylhomocysteine lyase of Yersinia enterocolitica serotype O:8 / biotype 1B (strain NCTC 13174 / 8081).